The following is a 383-amino-acid chain: Cobalt-precorrin-5B C(1)-methyltransferase (383 aa).

Positions 1–24 (MQPSARRPFDLATPAPNGLRRGRT) are disordered.

This sequence belongs to the CbiD family.

The catalysed reaction is Co-precorrin-5B + S-adenosyl-L-methionine = Co-precorrin-6A + S-adenosyl-L-homocysteine. It functions in the pathway cofactor biosynthesis; adenosylcobalamin biosynthesis; cob(II)yrinate a,c-diamide from sirohydrochlorin (anaerobic route): step 6/10. Functionally, catalyzes the methylation of C-1 in cobalt-precorrin-5B to form cobalt-precorrin-6A. This is Cobalt-precorrin-5B C(1)-methyltransferase from Ralstonia nicotianae (strain ATCC BAA-1114 / GMI1000) (Ralstonia solanacearum).